The chain runs to 512 residues: Lysine--tRNA ligase (512 aa).

Mg(2+) is bound by residues Glu421 and Glu428.

The protein belongs to the class-II aminoacyl-tRNA synthetase family. In terms of assembly, homodimer. The cofactor is Mg(2+).

The protein localises to the cytoplasm. It carries out the reaction tRNA(Lys) + L-lysine + ATP = L-lysyl-tRNA(Lys) + AMP + diphosphate. The polypeptide is Lysine--tRNA ligase (Aeromonas salmonicida (strain A449)).